An 85-amino-acid chain; its full sequence is U4-theraphotoxin-Hhn1c (85 aa).

The signal sequence occupies residues Met1–Ala22. The propeptide occupies Glu23–Arg48. 3 disulfides stabilise this stretch: Cys52-Cys66, Cys56-Cys77, and Cys71-Cys82.

Belongs to the neurotoxin 12 (Hwtx-2) family. 02 (Hwtx-2) subfamily. In terms of tissue distribution, expressed by the venom gland.

The protein localises to the secreted. In terms of biological role, postsynaptic neurotoxin. This chain is U4-theraphotoxin-Hhn1c, found in Cyriopagopus hainanus (Chinese bird spider).